We begin with the raw amino-acid sequence, 469 residues long: Interstitial collagenase (469 aa).

Residues 1-18 form the signal peptide; that stretch reads MPRLPLLLLLLWGTGSHG. The propeptide at 19–99 is activation peptide; the sequence is FPAATSETQE…PRCGVPDVAP (81 aa). The Cysteine switch signature appears at 90 to 97; that stretch reads PRCGVPDV. Residue Cys-92 participates in Zn(2+) binding. Residue Asn-120 is glycosylated (N-linked (GlcNAc...) asparagine). Residues Asp-124 and Asp-158 each contribute to the Ca(2+) site. The Zn(2+) site is built by His-168 and Asp-170. Ca(2+)-binding residues include Asp-175, Gly-176, Gly-178, and Asn-180. His-183 contacts Zn(2+). Ca(2+)-binding residues include Gly-190, Gly-192, and Asp-194. Residue His-196 coordinates Zn(2+). Ca(2+)-binding residues include Asp-198, Asp-199, and Glu-201. His-218 contacts Zn(2+). The active site involves Glu-219. Zn(2+) is bound by residues His-222 and His-228. Phosphothreonine is present on Thr-274. Hemopexin repeat units lie at residues 275 to 324, 325 to 371, 374 to 422, and 423 to 466; these read PEVC…WPQL, PNGL…FGFP, VKSI…FPGI, and GNKV…WFNC. Residues Cys-278 and Cys-466 are joined by a disulfide bond. Ca(2+)-binding residues include Asp-285 and Gln-329. Tyr-360 is modified (phosphotyrosine; by PKDCC). Positions 378 and 427 each coordinate Ca(2+).

This sequence belongs to the peptidase M10A family. Ca(2+) is required as a cofactor. It depends on Zn(2+) as a cofactor. In terms of processing, tyrosine phosphorylated in platelets by PKDCC/VLK.

Its subcellular location is the secreted. It localises to the extracellular space. The protein localises to the extracellular matrix. The catalysed reaction is Cleavage of the triple helix of collagen at about three-quarters of the length of the molecule from the N-terminus, at 775-Gly-|-Ile-776 in the alpha1(I) chain. Cleaves synthetic substrates and alpha-macroglobulins at bonds where P1' is a hydrophobic residue.. Can be activated without removal of the activation peptide. Cleaves collagens of types I, II, and III at one site in the helical domain. Also cleaves collagens of types VII and X. This Bos taurus (Bovine) protein is Interstitial collagenase (MMP1).